The sequence spans 566 residues: E3 ubiquitin-protein ligase RNF220 (566 aa).

Lysine 277 is covalently cross-linked (Glycyl lysine isopeptide (Lys-Gly) (interchain with G-Cter in SUMO2)). Positions 277–297 are disordered; sequence KREGESPTASPHSSATDDLHH. Position 390 is a phosphoserine (serine 390). Residues 485–513 adopt a coiled-coil conformation; the sequence is EDSAVTTFEALKARVRELERQLSRGDRYK. The required for targeting to the cytoplasm stretch occupies residues 514–522; it reads CLICMDSYS. Residues 514–553 form an RING-type zinc finger; that stretch reads CLICMDSYSMPLTSIQCWHVHCEECWLRTLGAKKLCPQCN.

In terms of assembly, interacts with SIN3B. Interacts with CTNNB1 (via Armadillo repeats 2-8). Interacts with USP7 (via MATH domain). In terms of processing, auto-ubiquitinated; leads to proteasomal degradation. In terms of tissue distribution, ubiquitously expressed. Abundant in brain and spinal cord, particularly in the cerebellum and cerebral cortex. In fetal tissues expressed in the cerebellum, spinal cord and cortex.

Its subcellular location is the cytoplasm. The protein resides in the nucleus. It catalyses the reaction S-ubiquitinyl-[E2 ubiquitin-conjugating enzyme]-L-cysteine + [acceptor protein]-L-lysine = [E2 ubiquitin-conjugating enzyme]-L-cysteine + N(6)-ubiquitinyl-[acceptor protein]-L-lysine.. Its pathway is protein modification; protein ubiquitination. Its function is as follows. E3 ubiquitin-protein ligase that promotes the ubiquitination and proteasomal degradation of SIN3B. Independently of its E3 ligase activity, acts as a CTNNB1 stabilizer through USP7-mediated deubiquitination of CTNNB1 promoting Wnt signaling. Plays a critical role in the regulation of nuclear lamina. The polypeptide is E3 ubiquitin-protein ligase RNF220 (RNF220) (Homo sapiens (Human)).